A 369-amino-acid polypeptide reads, in one-letter code: DNA replication and repair protein RecF (369 aa).

Position 30-37 (30-37 (GDNAQGKT)) interacts with ATP.

The protein belongs to the RecF family.

It is found in the cytoplasm. Its function is as follows. The RecF protein is involved in DNA metabolism; it is required for DNA replication and normal SOS inducibility. RecF binds preferentially to single-stranded, linear DNA. It also seems to bind ATP. The chain is DNA replication and repair protein RecF from Streptococcus equi subsp. zooepidemicus (strain MGCS10565).